Consider the following 84-residue polypeptide: Apovitellenin-1 (84 aa).

This sequence belongs to the apovitellenin family. Monomer.

Protein component of the very low density lipoprotein (VLDL) of egg-laying females. Potent lipoprotein lipase inhibitor, preventing the loss of triglycerides from VLDL on their way from the liver to the growing oocytes. The sequence is that of Apovitellenin-1 from Dromaius novaehollandiae (Emu).